A 70-amino-acid chain; its full sequence is Large ribosomal subunit protein bL31 (70 aa).

4 residues coordinate Zn(2+): Cys16, Cys18, Cys37, and Cys40.

This sequence belongs to the bacterial ribosomal protein bL31 family. Type A subfamily. Part of the 50S ribosomal subunit. Requires Zn(2+) as cofactor.

Its function is as follows. Binds the 23S rRNA. The chain is Large ribosomal subunit protein bL31 from Proteus mirabilis (strain HI4320).